A 142-amino-acid chain; its full sequence is ATP synthase epsilon chain (142 aa).

It belongs to the ATPase epsilon chain family. F-type ATPases have 2 components, CF(1) - the catalytic core - and CF(0) - the membrane proton channel. CF(1) has five subunits: alpha(3), beta(3), gamma(1), delta(1), epsilon(1). CF(0) has three main subunits: a, b and c.

The protein localises to the cell inner membrane. Functionally, produces ATP from ADP in the presence of a proton gradient across the membrane. This chain is ATP synthase epsilon chain, found in Pasteurella multocida (strain Pm70).